A 634-amino-acid polypeptide reads, in one-letter code: Chaperone protein DnaK (634 aa).

Threonine 193 bears the Phosphothreonine; by autocatalysis mark. Positions 597-634 (GNANNTSSTESTTTNNNNEEDSKVVDSDYQEIDKKDGK) are disordered. Positions 600 to 613 (NNTSSTESTTTNNN) are enriched in low complexity. Positions 616–634 (EDSKVVDSDYQEIDKKDGK) are enriched in basic and acidic residues.

Belongs to the heat shock protein 70 family.

Functionally, acts as a chaperone. This Ehrlichia canis (strain Jake) protein is Chaperone protein DnaK.